The primary structure comprises 637 residues: Chaperone protein DnaK (637 aa).

At Thr198 the chain carries Phosphothreonine; by autocatalysis. Residues 601–615 (AQQKAQAEQAGADAG) are compositionally biased toward low complexity. The interval 601-637 (AQQKAQAEQAGADAGEQPKQDDDVVDAEFEEVKEDKK) is disordered. Over residues 623-637 (DVVDAEFEEVKEDKK) the composition is skewed to acidic residues.

The protein belongs to the heat shock protein 70 family.

Functionally, acts as a chaperone. The polypeptide is Chaperone protein DnaK (Vibrio atlanticus (strain LGP32) (Vibrio splendidus (strain Mel32))).